A 322-amino-acid chain; its full sequence is Outer membrane protein assembly factor BamC (322 aa).

An N-terminal signal peptide occupies residues 1–22; the sequence is MISLLAVAVLAGCSNPETRSQA.

The protein belongs to the BamC family. As to quaternary structure, part of the Bam complex.

It localises to the cell outer membrane. Part of the outer membrane protein assembly complex, which is involved in assembly and insertion of beta-barrel proteins into the outer membrane. The polypeptide is Outer membrane protein assembly factor BamC (Oceanimonas sp. (strain GK1 / IBRC-M 10197)).